We begin with the raw amino-acid sequence, 366 residues long: Mitochondrial carrier protein MTM1 (366 aa).

3 Solcar repeats span residues Glu-14–Val-149, Tyr-156–Arg-250, and Val-266–Val-359. The next 6 membrane-spanning stretches (helical) occupy residues Leu-17–Val-36, Ser-126–Ile-146, Leu-162–Val-182, Thr-229–Glu-249, Phe-268–Thr-286, and Leu-331–Ser-352.

The protein belongs to the mitochondrial carrier (TC 2.A.29) family.

It localises to the mitochondrion inner membrane. In terms of biological role, involved in the mitochondrial activation of SOD2 by specifically facilitating insertion of the essential manganese cofactor. Has the ability to activate iron regulon in an iron-dependent manner. Responds to calorie restriction (CR) strength. The sequence is that of Mitochondrial carrier protein MTM1 (MTM1) from Saccharomyces cerevisiae (strain ATCC 204508 / S288c) (Baker's yeast).